A 399-amino-acid polypeptide reads, in one-letter code: MKKLAILGATGSIGDSTLSVCRSNPELYQITLLAASSSVDKMLALCREFTPLYVSMSSEISAKKLRGLLKRNNLSCHVLDDEQRLLELLASDHVDSVMAAIVGAAGLKTTLAAVDAGKEVFLANKEALVMSGALFIDAVKKSGAKLWPVDSEHNAIYQALSPKLQNTIGACDLSGEGVSKILLTGSGGPFLEKPLAEFAAITPAQAVKHPNWSMGKKISIDSATMMNKGLEYIEARWLFNANKEQLQIIIHPQSVIHSMVQYKDGSVIAQMGNPNMRIPIAYVLGGEQRIESGTDFLDFFAAPDFSFTAPDFDRYPCLKLAIDACFEGQQSTTILNAANEIAVEAFLNQTIKFTQISQLVERVLNQHESAAIESVEHLLEIDTEARLSASEIIKRDYLC.

NADPH contacts are provided by Thr-10, Gly-11, Ser-12, Ile-13, and Asn-124. Lys-125 provides a ligand contact to 1-deoxy-D-xylulose 5-phosphate. Glu-126 provides a ligand contact to NADPH. Asp-150 serves as a coordination point for Mn(2+). 1-deoxy-D-xylulose 5-phosphate is bound by residues Ser-151, Glu-152, Ser-186, and His-209. Glu-152 serves as a coordination point for Mn(2+). Gly-215 contacts NADPH. 1-deoxy-D-xylulose 5-phosphate is bound by residues Ser-222, Asn-227, Lys-228, and Glu-231. Glu-231 contacts Mn(2+).

The protein belongs to the DXR family. The cofactor is Mg(2+). Mn(2+) serves as cofactor.

The catalysed reaction is 2-C-methyl-D-erythritol 4-phosphate + NADP(+) = 1-deoxy-D-xylulose 5-phosphate + NADPH + H(+). The protein operates within isoprenoid biosynthesis; isopentenyl diphosphate biosynthesis via DXP pathway; isopentenyl diphosphate from 1-deoxy-D-xylulose 5-phosphate: step 1/6. Its function is as follows. Catalyzes the NADPH-dependent rearrangement and reduction of 1-deoxy-D-xylulose-5-phosphate (DXP) to 2-C-methyl-D-erythritol 4-phosphate (MEP). This is 1-deoxy-D-xylulose 5-phosphate reductoisomerase from Psychromonas ingrahamii (strain DSM 17664 / CCUG 51855 / 37).